Here is a 582-residue protein sequence, read N- to C-terminus: Beta-glucosidase 28 (582 aa).

An N-terminal signal peptide occupies residues 1–21; that stretch reads MKMHFFILLVITSWLSEKITS. Residues glutamine 48, histidine 151, and 196-197 contribute to the a beta-D-glucoside site; that span reads NE. Glutamate 197 acts as the Proton donor in catalysis. Cysteine 216 and cysteine 224 form a disulfide bridge. N-linked (GlcNAc...) asparagine glycosylation is found at asparagine 255 and asparagine 330. Tyrosine 340 is an a beta-D-glucoside binding site. Residue asparagine 370 is glycosylated (N-linked (GlcNAc...) asparagine). Glutamate 412 contacts a beta-D-glucoside. The active-site Nucleophile is glutamate 412. N-linked (GlcNAc...) asparagine glycosylation occurs at asparagine 430. A beta-D-glucoside-binding positions include tryptophan 462, 469–470, and phenylalanine 478; that span reads EW. N-linked (GlcNAc...) asparagine glycans are attached at residues asparagine 521 and asparagine 544.

This sequence belongs to the glycosyl hydrolase 1 family.

The catalysed reaction is Hydrolysis of terminal, non-reducing beta-D-glucosyl residues with release of beta-D-glucose.. The protein is Beta-glucosidase 28 of Arabidopsis thaliana (Mouse-ear cress).